The primary structure comprises 144 residues: Maximins 3/H2 (144 aa).

An N-terminal signal peptide occupies residues 1–18; the sequence is MNFKYIVAVSFLIASAYA. Propeptides lie at residues 19-43 and 74-123; these read RSVQ…REIR and TAEE…KEKR. I143 carries the isoleucine amide modification.

Belongs to the bombinin family. As to expression, expressed by the skin glands.

It is found in the secreted. Functionally, maximin-3 shows antibacterial activity against both Gram-positive and Gram-negative bacteria. It also shows antimicrobial activity against the fungus C.albicans, but not against A.flavus nor P.uticale. It has little hemolytic activity. It possess a significant cytotoxicity against tumor cell lines. It possess a significant anti-HIV activity. It shows high spermicidal activity. Its function is as follows. Maximin-H2 shows antibacterial activity against both Gram-positive and Gram-negative bacteria. It also shows antimicrobial activity against the fungus C.albicans. Shows strong hemolytic activity. This chain is Maximins 3/H2, found in Bombina maxima (Giant fire-bellied toad).